Reading from the N-terminus, the 444-residue chain is Methylenetetrahydrofolate--tRNA-(uracil-5-)-methyltransferase TrmFO (444 aa).

FAD is bound at residue 10-15 (GAGLAG).

This sequence belongs to the MnmG family. TrmFO subfamily. Requires FAD as cofactor.

The protein resides in the cytoplasm. The enzyme catalyses uridine(54) in tRNA + (6R)-5,10-methylene-5,6,7,8-tetrahydrofolate + NADH + H(+) = 5-methyluridine(54) in tRNA + (6S)-5,6,7,8-tetrahydrofolate + NAD(+). The catalysed reaction is uridine(54) in tRNA + (6R)-5,10-methylene-5,6,7,8-tetrahydrofolate + NADPH + H(+) = 5-methyluridine(54) in tRNA + (6S)-5,6,7,8-tetrahydrofolate + NADP(+). Catalyzes the folate-dependent formation of 5-methyl-uridine at position 54 (M-5-U54) in all tRNAs. The polypeptide is Methylenetetrahydrofolate--tRNA-(uracil-5-)-methyltransferase TrmFO (Streptococcus equi subsp. zooepidemicus (strain H70)).